The sequence spans 267 residues: Thiamine pyrophosphokinase 2 (267 aa).

The protein belongs to the thiamine pyrophosphokinase family.

The protein resides in the cytoplasm. It is found in the cytosol. The catalysed reaction is thiamine + ATP = thiamine diphosphate + AMP + H(+). It functions in the pathway cofactor biosynthesis; thiamine diphosphate biosynthesis; thiamine diphosphate from thiamine: step 1/1. Its function is as follows. Catalyzes the phosphorylation of thiamine to thiamine pyrophosphate (TPP). TPP is an active cofactor for enzymes involved in glycolysis and energy production. Plant leaves require high levels of TPP for photosynthesis and carbohydrate metabolism. The sequence is that of Thiamine pyrophosphokinase 2 (TPK2) from Oryza sativa subsp. japonica (Rice).